Consider the following 190-residue polypeptide: uncharacterized protein (190 aa).

Belongs to the Iojap/RsfS family.

This is an uncharacterized protein from Caenorhabditis elegans.